The primary structure comprises 672 residues: Outer dynein arm-docking complex subunit 4 (672 aa).

TPR repeat units follow at residues 13–46 (FPSYMAEGERLYLCGEFSKAAQSFSNALYLQDGD), 48–80 (NCLVARSKCFLKMGDLERSLKDAEASLQSDPAF), 81–114 (CKGILQKAETLYTMGDFEFALVFYHRGYKLRPDR), 275–311 (LKSLEDIDMLLTSGSAEGSLQKAEKVLKKVLEWNKEE), 320–353 (GNLYSCIGNAQIELGQMEAALQSHRKDLEIAKEY), 360–393 (SRALDNIGRVFARVGKFQQAIDTWEEKIPLAKTT), 397–430 (TWLFHEIGRCYLELDQAWQAQNYGEKSQQCAEEE), and 437–470 (LNASVLVAQAQVKLRDFESAVNNFEKALERAKLV). A compositionally biased stretch (basic and acidic residues) spans 527–544 (RVRDEPEKVVKQWDHSED). The interval 527-672 (RVRDEPEKVV…TGNEMEKEYE (146 aa)) is disordered. Over residues 545-555 (EKETDEDDEAF) the composition is skewed to acidic residues. Composition is skewed to basic and acidic residues over residues 595–650 (ETGR…EELG) and 658–672 (GETKKTGNEMEKEYE).

As to quaternary structure, component of the outer dynein arm-docking complex along with ODAD1, ODAD2 and ODAD3. Interacts with ODAD1; this interaction may facilitate the recruitment and/or attachment of outer dynein arm docking complex proteins, including ODAD1, ODAD3 and ODAD2, to ciliary axonemes. Interacts with components of the IFT complex A, including IFT140, TTC21B/IFT139 and WDR19/IFT144, and the IFT complex B, including IFT46, IFT52 and IFT57. Interacts with CFAP53. In terms of tissue distribution, expressed in the nasal mucosa (at protein level).

It is found in the cytoplasm. Its subcellular location is the cytoskeleton. The protein resides in the cilium axoneme. Component of the outer dynein arm-docking complex (ODA-DC) that mediates outer dynein arms (ODA) binding onto the doublet microtubule. Plays an essential role for the assembly of ODA-DC and for the docking of ODA in ciliary axoneme. The protein is Outer dynein arm-docking complex subunit 4 of Homo sapiens (Human).